Reading from the N-terminus, the 687-residue chain is Sphingoid long chain base kinase 5 (687 aa).

A disordered region spans residues 1-20 (MTLKPSKRRKGRSRHSRKKQ). S-palmitoyl cysteine; by AKR1 attachment occurs at residues C91 and C94. The segment covering 101-116 (IDRSETSTTDTSKDDL) has biased composition (basic and acidic residues). 2 disordered regions span residues 101 to 130 (IDRS…VNGQ) and 180 to 207 (DELE…SLLT). The span at 193–207 (NSLSRGSNSSSSLLT) shows a compositional bias: low complexity. One can recognise a DAGKc domain in the interval 266–405 (RRNKSIFVII…IDLMCCSQPS (140 aa)). ATP contacts are provided by residues 276–278 (NPF) and T308. 333 to 336 (SGDG) lines the substrate pocket. The active-site Proton donor/acceptor is D335. ATP-binding positions include E340, 366–368 (GSG), R434, and R440. Over residues 506–524 (EYETENEDEDEDADADDED) the composition is skewed to acidic residues. Residues 506-525 (EYETENEDEDEDADADDEDS) form a disordered region. 652–654 (DGE) is an ATP binding site.

The protein resides in the golgi apparatus membrane. It catalyses the reaction (4R)-hydroxysphinganine + ATP = (4R)-hydroxysphinganine 1-phosphate + ADP + H(+). The catalysed reaction is a sphingoid base + ATP = a sphingoid 1-phosphate + ADP + H(+). The enzyme catalyses sphinganine + ATP = sphinganine 1-phosphate + ADP + H(+). In terms of biological role, catalyzes the phosphorylation of the sphingoid long chain bases dihydrosphingosine (DHS or sphinganine) and phytosphingosine (PHS) to form dihydrosphingosine 1-phosphate (DHS-1P) and phytosphingosine 1-phosphate (PHS-1P) respectively. Redundant to LCB4, is only responsible for few percent of the total activity. Involved in the biosynthesis of sphingolipids and ceramides. Involved in heat-induced transient cell cycle arrest. Accumulation of phosphorylated sphingoid long chain bases (LCBPs) stimulates calcium influx and activates calcineurin signaling. Involved in heat-stress resistance. The chain is Sphingoid long chain base kinase 5 (LCB5) from Saccharomyces cerevisiae (strain ATCC 204508 / S288c) (Baker's yeast).